A 193-amino-acid polypeptide reads, in one-letter code: uncharacterized protein (193 aa).

An N-terminal signal peptide occupies residues 1-26; it reads MRNVFVGALCMCGMSFVFSDSVRSAA.

This is an uncharacterized protein from Treponema pallidum (strain Nichols).